Reading from the N-terminus, the 213-residue chain is Large ribosomal subunit protein uL4 (213 aa).

The interval Thr51–Gly90 is disordered. Residues Gly63–Arg75 are compositionally biased toward basic residues.

Belongs to the universal ribosomal protein uL4 family. In terms of assembly, part of the 50S ribosomal subunit.

One of the primary rRNA binding proteins, this protein initially binds near the 5'-end of the 23S rRNA. It is important during the early stages of 50S assembly. It makes multiple contacts with different domains of the 23S rRNA in the assembled 50S subunit and ribosome. In terms of biological role, forms part of the polypeptide exit tunnel. This is Large ribosomal subunit protein uL4 from Malacoplasma penetrans (strain HF-2) (Mycoplasma penetrans).